We begin with the raw amino-acid sequence, 60 residues long: Large ribosomal subunit protein bL32 (60 aa).

Residues 1–19 (MAVPKRKKSKSRRNMHRSH) are compositionally biased toward basic residues. A disordered region spans residues 1 to 24 (MAVPKRKKSKSRRNMHRSHHAIEP).

This sequence belongs to the bacterial ribosomal protein bL32 family.

This chain is Large ribosomal subunit protein bL32, found in Wolbachia pipientis wMel.